The chain runs to 231 residues: GDSL lipase Rv0518 (231 aa).

The signal sequence occupies residues 1–20 (MSRPGTYVIGLTLLVGLVVG). Catalysis depends on S46, which acts as the Nucleophile. Residue D205 is the Proton donor of the active site. H208 functions as the Proton acceptor in the catalytic mechanism.

It belongs to the 'GDSL' lipolytic enzyme family.

The protein resides in the secreted. It localises to the cell wall. It is found in the extracellular space. The catalysed reaction is a fatty acid ester + H2O = an aliphatic alcohol + a fatty acid + H(+). The enzyme catalyses decanoate ester + H2O = decanoate + an aliphatic alcohol + H(+). It catalyses the reaction an octanoate ester + H2O = an aliphatic alcohol + octanoate + H(+). It carries out the reaction a dodecanoate ester + H2O = an aliphatic alcohol + dodecanoate + H(+). The catalysed reaction is a tetradecanoate ester + H2O = an aliphatic alcohol + tetradecanoate + H(+). With respect to regulation, activity is inhibited by the serine modifier phenylmethylsulfonyl fluoride (PMSF). Its function is as follows. GDSL lipase that catalyzes the hydrolysis of p-nitrophenyl (pNP) esters. pNP-decanoate (C10) is the preferred substrate. It can also use pNP-octanoate (C8), pNP-dodecanoate (C12) and pNP-tetradecanoate (C14). Has lower activity with pNP-butyrate (C4), pNP-palmitate (C16) and pNP-stearate (C18). Does not show phospholipase A1 activity. Might help bacteria to utilize available lipids for its growth as well as provide resistance to various intracellular stresses by cell wall modulation resulting in enhanced intracellular survival. This is GDSL lipase Rv0518 from Mycobacterium tuberculosis (strain ATCC 25618 / H37Rv).